The chain runs to 396 residues: Flavohemoprotein (396 aa).

The 136-residue stretch at 1–136 folds into the Globin domain; that stretch reads MLDAQTIATV…LANVFINREA (136 aa). His-85 lines the heme b pocket. Active-site charge relay system residues include Tyr-95 and Glu-135. The interval 147–396 is reductase; that stretch reads GGWEGTRDFR…YECFGPHKVL (250 aa). An FAD-binding FR-type domain is found at 150–255; sequence EGTRDFRIVA…VAPAGDFFMA (106 aa). FAD is bound by residues Tyr-188 and 204–207; that span reads RQYS. 268–273 serves as a coordination point for NADP(+); the sequence is GVGQTP. FAD is bound at residue 389–392; sequence CFGP.

The protein belongs to the globin family. Two-domain flavohemoproteins subfamily. It in the C-terminal section; belongs to the flavoprotein pyridine nucleotide cytochrome reductase family. The cofactor is heme b. Requires FAD as cofactor.

The catalysed reaction is 2 nitric oxide + NADPH + 2 O2 = 2 nitrate + NADP(+) + H(+). It carries out the reaction 2 nitric oxide + NADH + 2 O2 = 2 nitrate + NAD(+) + H(+). Is involved in NO detoxification in an aerobic process, termed nitric oxide dioxygenase (NOD) reaction that utilizes O(2) and NAD(P)H to convert NO to nitrate, which protects the bacterium from various noxious nitrogen compounds. Therefore, plays a central role in the inducible response to nitrosative stress. This Shigella flexneri protein is Flavohemoprotein.